Here is a 489-residue protein sequence, read N- to C-terminus: Long chain base biosynthesis protein 2a (489 aa).

A helical membrane pass occupies residues 2–22 (ITIPYLTAVSTYFSYGLLFAF). At lysine 311 the chain carries N6-(pyridoxal phosphate)lysine.

The protein belongs to the class-II pyridoxal-phosphate-dependent aminotransferase family. In terms of assembly, heterodimer with LCB1. Component of the serine palmitoyltransferase (SPT) complex, composed of LCB1 and LCB2 (LCB2a or LCB2b). Requires pyridoxal 5'-phosphate as cofactor. As to expression, ubiquitous. Detected in leaves, roots, stems, flowers and at a lower level in mature seeds.

The protein localises to the endoplasmic reticulum membrane. It catalyses the reaction L-serine + hexadecanoyl-CoA + H(+) = 3-oxosphinganine + CO2 + CoA. The protein operates within lipid metabolism; sphingolipid metabolism. Functionally, serine palmitoyltransferase (SPT). The heterodimer formed with LCB1 constitutes the catalytic core. Involved in the regulation of the programmed cell death (PCD) signaling pathway. Plays an important role during male gametogenesis and embryogenesis. In Arabidopsis thaliana (Mouse-ear cress), this protein is Long chain base biosynthesis protein 2a (LCB2a).